The following is a 457-amino-acid chain: Argininosuccinate lyase (457 aa).

The protein belongs to the lyase 1 family. Argininosuccinate lyase subfamily.

The protein resides in the cytoplasm. The enzyme catalyses 2-(N(omega)-L-arginino)succinate = fumarate + L-arginine. It functions in the pathway amino-acid biosynthesis; L-arginine biosynthesis; L-arginine from L-ornithine and carbamoyl phosphate: step 3/3. The protein is Argininosuccinate lyase of Haemophilus influenzae (strain ATCC 51907 / DSM 11121 / KW20 / Rd).